The following is a 293-amino-acid chain: Formamidopyrimidine-DNA glycosylase (293 aa).

Residue Pro-2 is the Schiff-base intermediate with DNA of the active site. The active-site Proton donor is the Glu-3. Residue Lys-58 is the Proton donor; for beta-elimination activity of the active site. DNA-binding residues include His-104, Arg-127, and Arg-170. An FPG-type zinc finger spans residues Ser-257 to Thr-293. Arg-283 functions as the Proton donor; for delta-elimination activity in the catalytic mechanism.

It belongs to the FPG family. As to quaternary structure, monomer. Zn(2+) serves as cofactor.

The enzyme catalyses Hydrolysis of DNA containing ring-opened 7-methylguanine residues, releasing 2,6-diamino-4-hydroxy-5-(N-methyl)formamidopyrimidine.. It catalyses the reaction 2'-deoxyribonucleotide-(2'-deoxyribose 5'-phosphate)-2'-deoxyribonucleotide-DNA = a 3'-end 2'-deoxyribonucleotide-(2,3-dehydro-2,3-deoxyribose 5'-phosphate)-DNA + a 5'-end 5'-phospho-2'-deoxyribonucleoside-DNA + H(+). Its function is as follows. Involved in base excision repair of DNA damaged by oxidation or by mutagenic agents. Acts as a DNA glycosylase that recognizes and removes damaged bases. Has a preference for oxidized purines, such as 7,8-dihydro-8-oxoguanine (8-oxoG). Has AP (apurinic/apyrimidinic) lyase activity and introduces nicks in the DNA strand. Cleaves the DNA backbone by beta-delta elimination to generate a single-strand break at the site of the removed base with both 3'- and 5'-phosphates. In Brucella ovis (strain ATCC 25840 / 63/290 / NCTC 10512), this protein is Formamidopyrimidine-DNA glycosylase.